We begin with the raw amino-acid sequence, 237 residues long: Large ribosomal subunit protein uL2 (237 aa).

The span at 1 to 11 shows a compositional bias: polar residues; the sequence is MGKRIISQNRG. Disordered stretches follow at residues 1–20 and 201–237; these read MGKR…YRAP and FGGG…GVRR.

It belongs to the universal ribosomal protein uL2 family. In terms of assembly, part of the 50S ribosomal subunit. Forms a bridge to the 30S subunit in the 70S ribosome.

Functionally, one of the primary rRNA binding proteins. Required for association of the 30S and 50S subunits to form the 70S ribosome, for tRNA binding and peptide bond formation. It has been suggested to have peptidyltransferase activity; this is somewhat controversial. Makes several contacts with the 16S rRNA in the 70S ribosome. The protein is Large ribosomal subunit protein uL2 of Archaeoglobus fulgidus (strain ATCC 49558 / DSM 4304 / JCM 9628 / NBRC 100126 / VC-16).